Consider the following 424-residue polypeptide: Riboflavin biosynthesis protein RibBA (424 aa).

Residues 1–206 (MVTCEAGIAS…VDDLITYRWT (206 aa)) form a DHBP synthase region. D-ribulose 5-phosphate contacts are provided by residues 32–33 (RE), aspartate 37, 145–149 (RPGHT), and glutamate 169. Glutamate 33 serves as a coordination point for Mg(2+). Residue histidine 148 coordinates Mg(2+). Positions 207-424 (FDSLVEHVSS…YETVERTSCC (218 aa)) are GTP cyclohydrolase II. 257–261 (RVHSE) is a GTP binding site. Residues cysteine 262, cysteine 273, and cysteine 275 each coordinate Zn(2+). Residues glutamine 278, 301–303 (EGR), and threonine 323 each bind GTP. The active-site Proton acceptor; for GTP cyclohydrolase activity is the aspartate 335. Residue arginine 337 is the Nucleophile; for GTP cyclohydrolase activity of the active site. GTP-binding residues include threonine 358 and lysine 363.

This sequence in the N-terminal section; belongs to the DHBP synthase family. It in the C-terminal section; belongs to the GTP cyclohydrolase II family. It depends on Mg(2+) as a cofactor. Requires Mn(2+) as cofactor. Zn(2+) serves as cofactor.

The enzyme catalyses D-ribulose 5-phosphate = (2S)-2-hydroxy-3-oxobutyl phosphate + formate + H(+). The catalysed reaction is GTP + 4 H2O = 2,5-diamino-6-hydroxy-4-(5-phosphoribosylamino)-pyrimidine + formate + 2 phosphate + 3 H(+). It functions in the pathway cofactor biosynthesis; riboflavin biosynthesis; 2-hydroxy-3-oxobutyl phosphate from D-ribulose 5-phosphate: step 1/1. The protein operates within cofactor biosynthesis; riboflavin biosynthesis; 5-amino-6-(D-ribitylamino)uracil from GTP: step 1/4. Catalyzes the conversion of D-ribulose 5-phosphate to formate and 3,4-dihydroxy-2-butanone 4-phosphate. Functionally, catalyzes the conversion of GTP to 2,5-diamino-6-ribosylamino-4(3H)-pyrimidinone 5'-phosphate (DARP), formate and pyrophosphate. This is Riboflavin biosynthesis protein RibBA from Chlamydia muridarum (strain MoPn / Nigg).